Here is a 140-residue protein sequence, read N- to C-terminus: ISDra2 transposase TnpA (140 aa).

Mg(2+)-binding residues include His67 and His69. A mobile alpha helix region spans residues 127–133; the sequence is AQIQKYI. The active-site Nucleophile is Tyr132. Gln136 contacts Mg(2+).

This sequence belongs to the transposase 17 family. In terms of assembly, homodimer. The cofactor is Mg(2+).

Its activity is regulated as follows. Both the excision and insertion steps are inhibited by TnpB. Functionally, a transposase that is part of insertion sequence (IS) element ISDra2, it is necessary and sufficient for both transposon excision and insertion of ISDra2. This protein alone can be provided in trans and allows transposition of an empty IS element (tnpA or tnpA-tnpB replaced by a selectable marker). ISDra2 binds subterminal imperfect palindromes at the left (LE) and right (RE) ends of the element and cleaves only the 'top strand' which is circularized and subsequently reinserted into the DNA target. This is called a 'peel and paste' mechanism and increases the copy number of the IS. Transposition is linked to DNA replication in the absence of irradiation, with maximal activity when the 'top strand' is on the replication lagging strand, and occurs preferentially on the lagging strand. The IS element inserts 3' of the target sequence 5'-TTGAT-3'; target duplication has not been observed. This chain is ISDra2 transposase TnpA, found in Deinococcus radiodurans (strain ATCC 13939 / DSM 20539 / JCM 16871 / CCUG 27074 / LMG 4051 / NBRC 15346 / NCIMB 9279 / VKM B-1422 / R1).